Reading from the N-terminus, the 89-residue chain is UPF0335 protein Caul_0876 (89 aa).

The protein belongs to the UPF0335 family.

This is UPF0335 protein Caul_0876 from Caulobacter sp. (strain K31).